The sequence spans 377 residues: tRNA-specific 2-thiouridylase MnmA (377 aa).

ATP-binding positions include 22 to 29 and M48; that span reads GMSGGVDS. The interaction with target base in tRNA stretch occupies residues 108-110; that stretch reads NPD. C113 (nucleophile) is an active-site residue. A disulfide bridge links C113 with C210. G138 contacts ATP. The tract at residues 160 to 162 is interaction with tRNA; that stretch reads KDQ. The active-site Cysteine persulfide intermediate is the C210. Positions 322 to 323 are interaction with tRNA; it reads RY.

The protein belongs to the MnmA/TRMU family.

Its subcellular location is the cytoplasm. It carries out the reaction S-sulfanyl-L-cysteinyl-[protein] + uridine(34) in tRNA + AH2 + ATP = 2-thiouridine(34) in tRNA + L-cysteinyl-[protein] + A + AMP + diphosphate + H(+). Its function is as follows. Catalyzes the 2-thiolation of uridine at the wobble position (U34) of tRNA, leading to the formation of s(2)U34. The sequence is that of tRNA-specific 2-thiouridylase MnmA from Shewanella amazonensis (strain ATCC BAA-1098 / SB2B).